A 294-amino-acid chain; its full sequence is Putative HTH-type transcriptional regulatory protein STK_12680 (294 aa).

The HTH cro/C1-type domain maps to 123–175; sequence LKKKREEMGLSLGEVAQALGVSRISIYDYEREDSYVSIDIAEKLVELFGDDIL. The H-T-H motif DNA-binding region spans 134–153; sequence LGEVAQALGVSRISIYDYER.

This Sulfurisphaera tokodaii (strain DSM 16993 / JCM 10545 / NBRC 100140 / 7) (Sulfolobus tokodaii) protein is Putative HTH-type transcriptional regulatory protein STK_12680.